The chain runs to 808 residues: MQRWPKYGGTDVNTRTVHDLLNTINTMSARIKTLERYEHALREIHKVVVILKPSANTHSFEPDALPALIMQFLSDFAGRDINTLTHNINYKYDYNYPPAPVPAMQPPPPPPQPPAPPQPPYYNNYPYYPPYPFSTPPPTQPPESNVAGVGGSQSLNQITLTNEEESELAALFKNMQTNMTWELVQNFVEVLIRIVRVHVVNNVTMINVISSITSVRTLIDYNFTEFIRCVYQKTNIRFAIDQYLCTNIVTFIDFFTRVFYLVMRTNFQFTTFDQLTQYSNELYTRIQTSILQSAAPLSPPTVETVNSDIVISNLQEQLKRERALMQQISEQHRIANERVETLQSQYDELDLKYKEIFEDKSEFAQQKSENVRKIKQLERSNKELNDTVQKLRDENAERLSEIQLQKGDLDEYKNMNRQLNEDIYKLKRRIESTFDKDYVETLNDKIESLEKQLDDKQNLNRELRSSISKIDETTQRYKLDAKDIMELKQSVSIKDQEIAMKNAQYLELSAIYQQTVNELTATKNELSQVATTNQSLFAENEESKVLLEGTLAFIDSFYQIIMQIEKPDYVPISKPQLTAQESIYQTDYIKDWLQKLRSKLSNADVANLQSVSELSDLKSQIISIVPRNIVNRILKENYKVKVENVNAELLESVAVTSAVSALVQQYERSEKQNVKLRQEFEIKLNDLQRLLEQNQTDFESISEFISRDPAFNRNLNDERFQNLRQQYDEMSSKYSALETTKIKEMESIADQAVKSEMSKLNTQLDELNSLFVKYNRKAQDIFEWKTSMLKRYETLARTTAASVQPNVE.

Over residues 132–141 (PFSTPPPTQP) the composition is skewed to pro residues. Residues 132-151 (PFSTPPPTQPPESNVAGVGG) form a disordered region.

In terms of assembly, interacts with the putative E3 ligase IE0 and with viral ubiquitin/vUbi.

It is found in the host nucleus. It localises to the host cytoplasm. Its function is as follows. Plays an essential role in the efficient egress of nucleocapsids from the host nucleus to the cytoplasm. The protein is Protein Ac66 (Ac66) of Lepidoptera (butterflies and moths).